The sequence spans 102 residues: Large ribosomal subunit protein bL21 (102 aa).

It belongs to the bacterial ribosomal protein bL21 family. Part of the 50S ribosomal subunit. Contacts protein L20.

This protein binds to 23S rRNA in the presence of protein L20. This Zymomonas mobilis subsp. mobilis (strain ATCC 31821 / ZM4 / CP4) protein is Large ribosomal subunit protein bL21.